Reading from the N-terminus, the 828-residue chain is Periplasmic nitrate reductase (828 aa).

Residues 1 to 31 constitute a signal peptide (tat-type signal); it reads MKLSRRSFMKANAVAAAAAAAGLSVPGVARA. The 4Fe-4S Mo/W bis-MGD-type domain occupies 39–95; sequence IKWDKAPCRFCGTGCGVLVGTQQGRVVACQGDPDAPVNRGLNCIKGYFLPKIMYGKD. Positions 46, 49, 53, and 81 each coordinate [4Fe-4S] cluster. Residues K83, Q150, N175, C179, 212–219, 243–247, 262–264, M372, Q376, N482, 508–509, K531, D558, and 718–727 contribute to the Mo-bis(molybdopterin guanine dinucleotide) site; these read WGANMAEM, STYQH, QSD, SD, and TGRVLEHWHT. F794 contributes to the substrate binding site. Residues N802 and K819 each contribute to the Mo-bis(molybdopterin guanine dinucleotide) site.

Belongs to the prokaryotic molybdopterin-containing oxidoreductase family. NasA/NapA/NarB subfamily. Component of the periplasmic nitrate reductase NapAB complex composed of NapA and NapB. The cofactor is [4Fe-4S] cluster. It depends on Mo-bis(molybdopterin guanine dinucleotide) as a cofactor. Predicted to be exported by the Tat system. The position of the signal peptide cleavage has not been experimentally proven.

Its subcellular location is the periplasm. The enzyme catalyses 2 Fe(II)-[cytochrome] + nitrate + 2 H(+) = 2 Fe(III)-[cytochrome] + nitrite + H2O. Its function is as follows. Catalytic subunit of the periplasmic nitrate reductase complex NapAB. Receives electrons from NapB and catalyzes the reduction of nitrate to nitrite. This is Periplasmic nitrate reductase from Escherichia coli O7:K1 (strain IAI39 / ExPEC).